The sequence spans 394 residues: S-adenosylmethionine synthase (394 aa).

ATP is bound at residue histidine 16. Position 18 (aspartate 18) interacts with Mg(2+). Glutamate 44 lines the K(+) pocket. 2 residues coordinate L-methionine: glutamate 57 and glutamine 99. Residues 99-109 are flexible loop; sequence QSPDIAQGVDE. ATP is bound by residues 173–175, 240–241, aspartate 249, 255–256, alanine 272, and lysine 276; these read DAK, RF, and RK. Aspartate 249 serves as a coordination point for L-methionine. Residue lysine 280 coordinates L-methionine.

It belongs to the AdoMet synthase family. As to quaternary structure, homotetramer; dimer of dimers. It depends on Mg(2+) as a cofactor. K(+) serves as cofactor.

The protein resides in the cytoplasm. It catalyses the reaction L-methionine + ATP + H2O = S-adenosyl-L-methionine + phosphate + diphosphate. The protein operates within amino-acid biosynthesis; S-adenosyl-L-methionine biosynthesis; S-adenosyl-L-methionine from L-methionine: step 1/1. In terms of biological role, catalyzes the formation of S-adenosylmethionine (AdoMet) from methionine and ATP. The overall synthetic reaction is composed of two sequential steps, AdoMet formation and the subsequent tripolyphosphate hydrolysis which occurs prior to release of AdoMet from the enzyme. The protein is S-adenosylmethionine synthase of Lacticaseibacillus paracasei (strain ATCC 334 / BCRC 17002 / CCUG 31169 / CIP 107868 / KCTC 3260 / NRRL B-441) (Lactobacillus paracasei).